The primary structure comprises 181 residues: Bifunctional protein PyrR (181 aa).

Residues 101-113 carry the PRPP-binding motif; sequence VILVDDVLFTGRT.

Belongs to the purine/pyrimidine phosphoribosyltransferase family. PyrR subfamily.

It catalyses the reaction UMP + diphosphate = 5-phospho-alpha-D-ribose 1-diphosphate + uracil. In terms of biological role, regulates the transcription of the pyrimidine nucleotide (pyr) operon in response to exogenous pyrimidines. Also displays a weak uracil phosphoribosyltransferase activity which is not physiologically significant. This is Bifunctional protein PyrR from Desulfosudis oleivorans (strain DSM 6200 / JCM 39069 / Hxd3) (Desulfococcus oleovorans).